The primary structure comprises 258 residues: Thiazole synthase (258 aa).

K100 (schiff-base intermediate with DXP) is an active-site residue. Residues G161, 187–188, and 209–210 contribute to the 1-deoxy-D-xylulose 5-phosphate site; these read AG and NT.

Belongs to the ThiG family. As to quaternary structure, homotetramer. Forms heterodimers with either ThiH or ThiS.

It is found in the cytoplasm. It catalyses the reaction [ThiS sulfur-carrier protein]-C-terminal-Gly-aminoethanethioate + 2-iminoacetate + 1-deoxy-D-xylulose 5-phosphate = [ThiS sulfur-carrier protein]-C-terminal Gly-Gly + 2-[(2R,5Z)-2-carboxy-4-methylthiazol-5(2H)-ylidene]ethyl phosphate + 2 H2O + H(+). It functions in the pathway cofactor biosynthesis; thiamine diphosphate biosynthesis. Catalyzes the rearrangement of 1-deoxy-D-xylulose 5-phosphate (DXP) to produce the thiazole phosphate moiety of thiamine. Sulfur is provided by the thiocarboxylate moiety of the carrier protein ThiS. In vitro, sulfur can be provided by H(2)S. The protein is Thiazole synthase of Campylobacter jejuni subsp. doylei (strain ATCC BAA-1458 / RM4099 / 269.97).